The following is an 89-amino-acid chain: Small ribosomal subunit protein uS15 (89 aa).

This sequence belongs to the universal ribosomal protein uS15 family. In terms of assembly, part of the 30S ribosomal subunit. Forms a bridge to the 50S subunit in the 70S ribosome, contacting the 23S rRNA.

Functionally, one of the primary rRNA binding proteins, it binds directly to 16S rRNA where it helps nucleate assembly of the platform of the 30S subunit by binding and bridging several RNA helices of the 16S rRNA. Its function is as follows. Forms an intersubunit bridge (bridge B4) with the 23S rRNA of the 50S subunit in the ribosome. In Rhizobium johnstonii (strain DSM 114642 / LMG 32736 / 3841) (Rhizobium leguminosarum bv. viciae), this protein is Small ribosomal subunit protein uS15.